Here is a 277-residue protein sequence, read N- to C-terminus: Digeranylgeranylglyceryl phosphate synthase (277 aa).

The next 7 membrane-spanning stretches (helical) occupy residues proline 13 to leucine 33, alanine 40 to phenylalanine 60, valine 89 to isoleucine 109, phenylalanine 143 to leucine 163, arginine 199 to tyrosine 219, leucine 220 to alanine 240, and tryptophan 256 to valine 276.

It belongs to the UbiA prenyltransferase family. DGGGP synthase subfamily. The cofactor is Mg(2+).

Its subcellular location is the cell membrane. The enzyme catalyses sn-3-O-(geranylgeranyl)glycerol 1-phosphate + (2E,6E,10E)-geranylgeranyl diphosphate = 2,3-bis-O-(geranylgeranyl)-sn-glycerol 1-phosphate + diphosphate. It participates in membrane lipid metabolism; glycerophospholipid metabolism. Prenyltransferase that catalyzes the transfer of the geranylgeranyl moiety of geranylgeranyl diphosphate (GGPP) to the C2 hydroxyl of (S)-3-O-geranylgeranylglyceryl phosphate (GGGP). This reaction is the second ether-bond-formation step in the biosynthesis of archaeal membrane lipids. This Natronomonas pharaonis (strain ATCC 35678 / DSM 2160 / CIP 103997 / JCM 8858 / NBRC 14720 / NCIMB 2260 / Gabara) (Halobacterium pharaonis) protein is Digeranylgeranylglyceryl phosphate synthase.